We begin with the raw amino-acid sequence, 218 residues long: uncharacterized protein (218 aa).

The disordered stretch occupies residues 1-67; sequence MARITNMGKR…KKKRSEYRRL (67 aa). The segment covering 29-39 has biased composition (low complexity); sequence NSSNTNEESSS. Residues 40–49 are compositionally biased toward polar residues; the sequence is QDNMKASFGS. Residues 58 to 67 are compositionally biased toward basic residues; it reads KKKRSEYRRL. 3 consecutive CCHC-type zinc fingers follow at residues 77-94, 100-117, and 124-141; these read KFCF…DCPE, SICF…ACSK, and AKCF…QCEQ. The CCHC-type 4; atypical zinc-finger motif lies at 152-168; sequence CCKFCSSVHHLAKDCDQ.

This is an uncharacterized protein from Schizosaccharomyces pombe (strain 972 / ATCC 24843) (Fission yeast).